A 321-amino-acid polypeptide reads, in one-letter code: MSQQEAVDAAFLPTLDLSRLVSSDAEERQKLVRACEVYGFFYLDLRSDAELIALWTGVLDLMGQYFNLSLDEKMRDSRNSDTHGYEPVATSTGAQDDLPDYYESLKASRDEVLTQSSKLAPAVKANHALLNRFIERAHAVTMMILRQLSIALELDDSHKFEAFHRHSEESLSTLSMFRYPKQEVLDVGVGHNKHTDIGTLTFLLCQQQGLQVLSKDPVGWRFVQPLPGCAVINVGDTLRFLSGSRFRSAVHRVIPVDQLQRQDRFSIAYFLRAENNATLNAVGGRTVSAKDWHDEKFDVFRKSREAQASDDVLTGGMERDM.

A disordered region spans residues 77-97 (SRNSDTHGYEPVATSTGAQDD). Residues 169–273 (ESLSTLSMFR…RFSIAYFLRA (105 aa)) form the Fe2OG dioxygenase domain. 3 residues coordinate Fe cation: His194, Asp196, and His251. 2-oxoglutarate is bound at residue Arg264.

This sequence belongs to the iron/ascorbate-dependent oxidoreductase family.

The protein operates within antifungal biosynthesis. Functionally, 2-oxoglutarate-dependent dioxygenase; part of the gene cluster that mediates the biosynthesis of the antifungal antibiotic FR901469, an inhibitor of beta-1,3-glucansynthase, exerting antifungal activity against the pathogenes Candida albicans and Aspergillus fumigatus. FR901469 is a cyclic depsipeptide containing 12 amino acid residues and a fatty acid chain. The NRPS frbI contains 12 modules responsible for the formation of the depsipeptide backbone which is denoted as Acyl-Thr-Ala-Tyr-Val-4OHPro-Thr-Thr-3OHPro-threo3OHGln-Gly-Thr-Orn-OH (C71H116N14O23). The PKS frbB is probably involved in the production of the hydrocarbon chain, and the acyl-CoA ligase frbC might be involved in the transport of the chain to the peptide ptoduct of frbI. Because FR901469 contains 3 hydroxylated amino acid residues, the 3 oxygenases frbA, frbH, and frbJ might be participating in amino acid hydroxylation. As no thioesterase domains were detected in frbI or frbB, the thioesterases frbD and frbE may instead release and cyclize the products of the NRPS and PKS, respectively. The chain is 2-oxoglutarate-dependent dioxygenase frbH from Dothideomycetidae sp. (strain 11243) (Fungal sp. (strain No.11243)).